The chain runs to 119 residues: Na(+)/H(+) antiporter subunit G (119 aa).

Transmembrane regions (helical) follow at residues 7–29 (IISI…IIRF), 44–61 (TLGV…FFLV), and 66–88 (VGKL…MMMG).

Belongs to the CPA3 antiporters (TC 2.A.63) subunit G family. Forms a heterooligomeric complex that consists of seven subunits: MrpA, MrpB, MrpC, MrpD, MrpE, MrpF and MrpG.

Its subcellular location is the cell membrane. In terms of biological role, mnh complex is a Na(+)Li(+)/H(+) antiporter involved in Na(+) and/or Li(+) excretion and Na(+) resistance. Na(+)/H(+) antiport consumes a transmembrane electrical potential, and is thus inferred to be electrogenic. Does not transport K(+), Ca(2+) or Mg(2+). This chain is Na(+)/H(+) antiporter subunit G (mrpG), found in Alkalihalophilus pseudofirmus (strain ATCC BAA-2126 / JCM 17055 / OF4) (Bacillus pseudofirmus).